A 45-amino-acid polypeptide reads, in one-letter code: Small polypeptide DEVIL 23 (45 aa).

Residues 13 to 44 are required for DVL/RTFL small polypeptide activity; sequence KSTLRCWDWCKEQRTRAYIIWRCLIFLLRWDD. A helical transmembrane segment spans residues 22 to 39; it reads CKEQRTRAYIIWRCLIFL.

Belongs to the DVL/RTFL small polypeptides family.

Its subcellular location is the cell membrane. In terms of biological role, small polypeptide acting as a regulatory molecule which coordinates cellular responses required for differentiation, growth and development, probably by restricting polar cell proliferation in lateral organs and coordinating socket cell recruitment and differentiation at trichome sites. In Arabidopsis thaliana (Mouse-ear cress), this protein is Small polypeptide DEVIL 23.